A 239-amino-acid polypeptide reads, in one-letter code: Phosphoribosylaminoimidazole-succinocarboxamide synthase (239 aa).

This sequence belongs to the SAICAR synthetase family.

The enzyme catalyses 5-amino-1-(5-phospho-D-ribosyl)imidazole-4-carboxylate + L-aspartate + ATP = (2S)-2-[5-amino-1-(5-phospho-beta-D-ribosyl)imidazole-4-carboxamido]succinate + ADP + phosphate + 2 H(+). It participates in purine metabolism; IMP biosynthesis via de novo pathway; 5-amino-1-(5-phospho-D-ribosyl)imidazole-4-carboxamide from 5-amino-1-(5-phospho-D-ribosyl)imidazole-4-carboxylate: step 1/2. The chain is Phosphoribosylaminoimidazole-succinocarboxamide synthase from Bacillus cereus (strain B4264).